We begin with the raw amino-acid sequence, 358 residues long: 3-dehydroquinate synthase (358 aa).

NAD(+)-binding positions include 70-75 (DGEQFK), 104-108 (GVIGD), 128-129 (TT), lysine 141, lysine 150, and 168-171 (CLHT). Zn(2+) contacts are provided by glutamate 183, histidine 246, and histidine 263.

Belongs to the sugar phosphate cyclases superfamily. Dehydroquinate synthase family. Co(2+) is required as a cofactor. Zn(2+) serves as cofactor. Requires NAD(+) as cofactor.

It localises to the cytoplasm. The catalysed reaction is 7-phospho-2-dehydro-3-deoxy-D-arabino-heptonate = 3-dehydroquinate + phosphate. It participates in metabolic intermediate biosynthesis; chorismate biosynthesis; chorismate from D-erythrose 4-phosphate and phosphoenolpyruvate: step 2/7. Functionally, catalyzes the conversion of 3-deoxy-D-arabino-heptulosonate 7-phosphate (DAHP) to dehydroquinate (DHQ). The sequence is that of 3-dehydroquinate synthase from Shewanella baltica (strain OS155 / ATCC BAA-1091).